Here is a 449-residue protein sequence, read N- to C-terminus: MTKPIVAIVGRPNVGKSTFFNRLIGERRAIVEDLPGTTRDRLYGDTFWNGREFTVVDTAGVLFGGEDPNLPEAEIARRTRAQAEHAIAEADAIIFIVDGRDGLTAADSDVADVLRTTSKPVVLAVNKCDSQERMLDAVEFYALNLGEPIPMSAFHGLGTGDVLDRLTEYLPPKTFTQEEERHLRIAIVGRPNVGKSSLLNRLLGQERSVVSSIPGTTRDPIDTTITYHGEPITLIDTAGIRRAGKIERGIEKYSVLRTLRAIERCDVALLLIDATEGVTAQDTHIAGMVVEAKKGLILVVNKWDAIEKDSHTYYAFQDQVREAFKFVDYAPIVFVSALTGQRVSHLLDYAREVYVQRQKRVPTSELNNFLREVMLQQPPMAVKKGAHLRLYYAVQPQTEPPVFLFFANDGELVHWSYARYLENRLRERYGFQGTPIVIVFRSRERKEER.

EngA-type G domains are found at residues 4-174 (PIVA…PPKT) and 183-358 (LRIA…VQRQ). Residues 10–17 (GRPNVGKS), 57–61 (DTAGV), 126–129 (NKCD), 189–196 (GRPNVGKS), 236–240 (DTAGI), and 301–304 (NKWD) contribute to the GTP site. The region spanning 359–444 (KRVPTSELNN…PIVIVFRSRE (86 aa)) is the KH-like domain.

Belongs to the TRAFAC class TrmE-Era-EngA-EngB-Septin-like GTPase superfamily. EngA (Der) GTPase family. Associates with the 50S ribosomal subunit.

Functionally, GTPase that plays an essential role in the late steps of ribosome biogenesis. This is GTPase Der from Chloroflexus aurantiacus (strain ATCC 29366 / DSM 635 / J-10-fl).